A 383-amino-acid polypeptide reads, in one-letter code: Teichoic acid glycerol-phosphate primase (383 aa).

This sequence belongs to the CDP-glycerol glycerophosphotransferase family.

It is found in the cell membrane. The catalysed reaction is N-acetyl-beta-D-mannosaminyl-(1-&gt;4)-N-acetyl-alpha-D-glucosaminyl di-trans,octa-cis-undecaprenyl diphosphate + CDP-glycerol = 4-O-[(2R)-glycerylphospho]-N-acetyl-beta-D-mannosaminyl-(1-&gt;4)-N-acetyl-alpha-D-glucosaminyl di-trans,octa-cis-undecaprenyl diphosphate + CMP + H(+). It participates in cell wall biogenesis; poly(ribitol phosphate) teichoic acid biosynthesis. In terms of biological role, catalyzes the addition of a single glycerol phosphate residue to the prenoldiphosphate-linked disaccharide. This chain is Teichoic acid glycerol-phosphate primase (tarB), found in Bacillus spizizenii (strain ATCC 23059 / NRRL B-14472 / W23) (Bacillus subtilis subsp. spizizenii).